Reading from the N-terminus, the 421-residue chain is Prenyltransferase asqH2 (421 aa).

The tract at residues 1–28 (MDRNSFTAYGPATGAITESGEQENDHTK) is disordered. An L-tryptophan-binding site is contributed by Glu-105. Substrate contacts are provided by Arg-119, Arg-272, Lys-274, Tyr-276, and Tyr-341.

Belongs to the tryptophan dimethylallyltransferase family.

The enzyme catalyses yaequinolone E + dimethylallyl diphosphate + H2O = [(1'E)-3'-hydroxy-3',7'-dimethylocta-1',6'-dien-1'-yl]-quinolinone B + diphosphate. Its pathway is secondary metabolite biosynthesis. The protein operates within alkaloid biosynthesis. It participates in mycotoxin biosynthesis. Prenyltransferase; part of the gene cluster that mediates the biosynthesis of the aspoquinolone mycotoxins. Within the pathway, the prenyltransferase asqH2 performs the second alkylation with DMAPP at delta(3') double bond to yield a carbenium ion intermediate, which can be attacked by H(2)O to yield a styrenyl quinolone containing a C3'-hydroxyprenyl chain. The first step of the pathway is catalyzed by the nonribosomal peptide synthetase asqK that condenses anthranilic acid and O-methyl-L-tyrosine to produce 4'-methoxycyclopeptin. 4'-methoxycyclopeptin is then converted to 4'-methoxydehydrocyclopeptin by the ketoglutarate-dependent dioxygenase asqJ. AsqJ also converts its first product 4'-methoxydehydrocyclopeptin to 4'-methoxycyclopenin. The following conversion of 4'-methoxycyclopenin into 4'-methoxyviridicatin is catalyzed by the cyclopenase asqI. 4'-methoxyviridicatin is the precursor of quinolone natural products, and is further converted to quinolinone B. The prenyltransferase asqH1 then catalyzes the canonical Friedel-Crafts alkylation of quinolinone B with dimethylallyl cation to yield dimethylallyl quinolone, which is subjected to FAD-dependent dehydrogenation by the FAD-linked oxidoreductase asqF to yield conjugated aryl diene. The delta(3') double bond then serves as the site of the second alkylation with DMAPP catalyzed by the prenyltransferase asqH2 to yield a carbenium ion intermediate, which can be attacked by H(2)O to yield a styrenyl quinolone containing a C3'-hydroxyprenyl chain. The FAD-dependent monooxygenase asqG performs epoxidation of the terminal C7'-C8' olefin. Finally, after dehydratation of the epoxide at C3 by asqC, the quinolone epoxide rearrangement protein asqO catalyzes an enzymatic 3-exo-tet cyclization to yield the cyclopropyl-THF ring system in aspoquinolone. In Emericella nidulans (strain FGSC A4 / ATCC 38163 / CBS 112.46 / NRRL 194 / M139) (Aspergillus nidulans), this protein is Prenyltransferase asqH2.